The sequence spans 650 residues: MGKIIGIDLGTTNSCVAIMEGNQVKVIENSEGARTTPSIIAYMDDNEVLVGAPAKRQSVTNPKNTLFAVKRLIGRRFEEKEVQKDIGLMPYSIIKADNGDAWVEAHGEKLAPPQVSAEVLRKMKKTAEDYLGEPVTEAVITVPAYFNDSQRQATKDAGRIAGLEVKRIINEPTAAALAFGLDKAEKGDRKIAVYDLGGGTFDVSIIEIADVDGEMQFEVLSTNGDTFLGGEDFDQRIIDYIIGEFKKEQGVDLSKDVLALQRLKEAAEKAKIELSSGQQTEINLPYITADASGPKHLNLKITRAKLEALVEDLVERTIEPCRIAIKDAGVKVSDIDDVILVGGQTRMPKVMEKVKEFFGKDPRRDVNPDEAVAVGAAIQGQVLSGDRKDVLLLDVTPLSLGIETLGGVMTKMINKNTTIPTKHAQVYSTADDNQGAVTIKVFQGEREMAAGNKLLGEFNLEGIPPAPRGVPQIEVTFDIDANGILHVGAKDKATGKENKITIKANSGLSEAEIDQMIKDAEANAAEDHKLRELADSRNQGDALVHSTKKALTEYGDKLDAGEKEAIEAALKSLEDVLKDTSADKAAIDAKVEELGKVSQKLGEKMYADMQAQQAGAAGAAGAAEGAAHAGGAQQAADDVVDAEFKEVKKD.

The residue at position 200 (T200) is a Phosphothreonine; by autocatalysis. The disordered stretch occupies residues 614–634 (AGAAGAAGAAEGAAHAGGAQQ).

The protein belongs to the heat shock protein 70 family.

Functionally, acts as a chaperone. This Burkholderia cenocepacia (strain ATCC BAA-245 / DSM 16553 / LMG 16656 / NCTC 13227 / J2315 / CF5610) (Burkholderia cepacia (strain J2315)) protein is Chaperone protein DnaK.